Reading from the N-terminus, the 152-residue chain is UPF0266 membrane protein YobD (152 aa).

Transmembrane regions (helical) follow at residues 6–26 (LVLI…QFIM), 45–65 (VDSV…VTSH), and 67–87 (AQMT…IFWI).

The protein belongs to the UPF0266 family.

It is found in the cell inner membrane. In Salmonella agona (strain SL483), this protein is UPF0266 membrane protein YobD.